Reading from the N-terminus, the 184-residue chain is Ribosome-recycling factor (184 aa).

Belongs to the RRF family.

The protein localises to the cytoplasm. Functionally, responsible for the release of ribosomes from messenger RNA at the termination of protein biosynthesis. May increase the efficiency of translation by recycling ribosomes from one round of translation to another. The chain is Ribosome-recycling factor from Desulfotalea psychrophila (strain LSv54 / DSM 12343).